Consider the following 293-residue polypeptide: Protein transport protein yif1 (293 aa).

The Cytoplasmic portion of the chain corresponds to 1–139 (MPPKLYHPQP…PPAEDLNSPD (139 aa)). Residues 140-160 (MYIPLMAFTTHILLLCALAGL) traverse the membrane as a helical segment. Residues 161 to 175 (QDDFQPELFGLRASK) lie on the Lumenal side of the membrane. The chain crosses the membrane as a helical span at residues 176 to 196 (ACAVVLVEFLATRLGCYLLNI). Residues 197-201 (SSQSQ) lie on the Cytoplasmic side of the membrane. Residues 202 to 222 (VLDLLAFSGYKFVGLILTSLS) traverse the membrane as a helical segment. Residues 223–226 (KLFE) lie on the Lumenal side of the membrane. A helical transmembrane segment spans residues 227 to 247 (MPWVTRFVFLYMYLATAFFLL). Topologically, residues 248–271 (RSLKYAVLPESTMAINATITSHQR) are cytoplasmic. Residues 272 to 292 (SRRIYFLFFIAASQILFMYVL) form a helical membrane-spanning segment. Ser293 is a topological domain (lumenal).

Belongs to the YIF1 family. Component of the yip1-yif1 complex, composed of at least yif1, yip1 and yos1. The complex interacts with the ER to Golgi SNAREs bos1 and sec22.

It is found in the endoplasmic reticulum membrane. It localises to the golgi apparatus membrane. The protein localises to the cytoplasmic vesicle. The protein resides in the COPII-coated vesicle. Functionally, required for fusion of ER-derived vesicles with the Golgi during ER-to-Golgi protein transport. May be involved in proper membrane localization of Rab GTPases. The polypeptide is Protein transport protein yif1 (Schizosaccharomyces pombe (strain 972 / ATCC 24843) (Fission yeast)).